Here is a 275-residue protein sequence, read N- to C-terminus: Bifunctional protein FolD (275 aa).

NADP(+)-binding positions include 161–163 (GRS), Ser186, and Thr227.

It belongs to the tetrahydrofolate dehydrogenase/cyclohydrolase family. As to quaternary structure, homodimer.

The enzyme catalyses (6R)-5,10-methylene-5,6,7,8-tetrahydrofolate + NADP(+) = (6R)-5,10-methenyltetrahydrofolate + NADPH. It carries out the reaction (6R)-5,10-methenyltetrahydrofolate + H2O = (6R)-10-formyltetrahydrofolate + H(+). The protein operates within one-carbon metabolism; tetrahydrofolate interconversion. Its function is as follows. Catalyzes the oxidation of 5,10-methylenetetrahydrofolate to 5,10-methenyltetrahydrofolate and then the hydrolysis of 5,10-methenyltetrahydrofolate to 10-formyltetrahydrofolate. The chain is Bifunctional protein FolD from Parafrankia sp. (strain EAN1pec).